The chain runs to 351 residues: tRNA N6-adenosine threonylcarbamoyltransferase (351 aa).

H124 and H128 together coordinate Fe cation. Residues 146–150 (LVSGG), D180, G193, D197, and N285 each bind substrate. D313 contacts Fe cation.

This sequence belongs to the KAE1 / TsaD family. Fe(2+) is required as a cofactor.

It is found in the cytoplasm. The catalysed reaction is L-threonylcarbamoyladenylate + adenosine(37) in tRNA = N(6)-L-threonylcarbamoyladenosine(37) in tRNA + AMP + H(+). Its function is as follows. Required for the formation of a threonylcarbamoyl group on adenosine at position 37 (t(6)A37) in tRNAs that read codons beginning with adenine. Is involved in the transfer of the threonylcarbamoyl moiety of threonylcarbamoyl-AMP (TC-AMP) to the N6 group of A37, together with TsaE and TsaB. TsaD likely plays a direct catalytic role in this reaction. This Mycobacterium leprae (strain TN) protein is tRNA N6-adenosine threonylcarbamoyltransferase.